We begin with the raw amino-acid sequence, 76 residues long: CLAVATA3/ESR (CLE)-related protein 46 (76 aa).

Residues 1 to 26 (MRRHDIIIKLLLLMCLLLSRFVTREC) form the signal peptide. The disordered stretch occupies residues 53–76 (EEKKWHKHPSGPNPTGNRHPPVKH). A hydroxyproline mark is found at Pro61 and Pro64. Pro64 carries an O-linked (Ara...) hydroxyproline glycan.

Belongs to the CLV3/ESR signal peptide family. The O-glycosylation (arabinosylation) of the hydroxyproline Pro-64 enhances binding affinity of the CLE46p peptide for its receptor.

It is found in the secreted. The protein localises to the extracellular space. Its function is as follows. Extracellular signal peptide that regulates cell fate. This Arabidopsis thaliana (Mouse-ear cress) protein is CLAVATA3/ESR (CLE)-related protein 46.